The chain runs to 349 residues: MNFLYSTVNTLRDRYTPVSHKSTFRQTGQITPEEFVAAGDYLVYKFPTWSWGDADSPERRVSHLPPGKQFLVTRNVPCHRRLNDDFAGDAGHEEALVNDGDDFKGNAGDDEDGWLRTGGLASSQPLKVKEVRTVDDSGNVGDREVVEDDEIPDMEDEDDDEAIIRDSGADSKNSAHRTYTLYIMYSPYYRTPRLYLSGYLANGQPLPPTDMTEDIVGDYKDKTVTLEDFPFFANNIKMASVHPCKHASVMKTLLDRADAALRLRREKLRAGNASSSQAPSGMEGLVDEIGKLDVKGAQEAADKDEWEEVQEAEIDDQEVAIRVDQYLVVFLKFMASVTPGIEHDFTMGV.

Positions 95 to 173 (ALVNDGDDFK…IRDSGADSKN (79 aa)) are flexible region. Residue Cys244 is the Glycyl thioester intermediate of the active site. Residues 248–325 (SVMKTLLDRA…DQEVAIRVDQ (78 aa)) are handle region. An ATG8 interaction motif (AIM) motif is present at residues 306 to 309 (WEEV).

Belongs to the ATG3 family. Monomer. Interacts with ATG8 through an intermediate thioester bond between Cys-244 and the C-terminal Gly of ATG8. Interacts with the C-terminal region of the E1-like ATG7 enzyme. Also interacts with the ATG12-ATG5 conjugate.

The protein resides in the cytoplasm. In terms of biological role, E2 conjugating enzyme required for the cytoplasm to vacuole transport (Cvt) and autophagy. Required for selective autophagic degradation of the nucleus (nucleophagy) as well as for mitophagy which contributes to regulate mitochondrial quantity and quality by eliminating the mitochondria to a basal level to fulfill cellular energy requirements and preventing excess ROS production. Responsible for the E2-like covalent binding of phosphatidylethanolamine to the C-terminal Gly of ATG8. The ATG12-ATG5 conjugate plays a role of an E3 and promotes the transfer of ATG8 from ATG3 to phosphatidylethanolamine (PE). This step is required for the membrane association of ATG8. The formation of the ATG8-phosphatidylethanolamine conjugate is essential for autophagy and for the cytoplasm to vacuole transport (Cvt). The ATG8-PE conjugate mediates tethering between adjacent membranes and stimulates membrane hemifusion, leading to expansion of the autophagosomal membrane during autophagy. Autophagy is required for proper vegetative growth, asexual/sexual reproduction, and full virulence. Autophagy is particularly involved in the biosynthesis of deoxynivalenol (DON), an important virulence determinant. The chain is Autophagy-related protein 3 from Gibberella zeae (strain ATCC MYA-4620 / CBS 123657 / FGSC 9075 / NRRL 31084 / PH-1) (Wheat head blight fungus).